The sequence spans 260 residues: 3'-5' ssDNA/RNA exonuclease TatD (260 aa).

The a divalent metal cation site is built by Glu-92, His-128, and His-153.

The protein belongs to the metallo-dependent hydrolases superfamily. TatD-type hydrolase family. TatD subfamily. As to quaternary structure, monomer. Requires Mg(2+) as cofactor.

It is found in the cytoplasm. Its function is as follows. 3'-5' exonuclease that prefers single-stranded DNA and RNA. May play a role in the H(2)O(2)-induced DNA damage repair. This Pectobacterium atrosepticum (strain SCRI 1043 / ATCC BAA-672) (Erwinia carotovora subsp. atroseptica) protein is 3'-5' ssDNA/RNA exonuclease TatD.